The following is a 341-amino-acid chain: Heat-inducible transcription repressor HrcA (341 aa).

This sequence belongs to the HrcA family.

In terms of biological role, negative regulator of class I heat shock genes (grpE-dnaK-dnaJ and groELS operons). Prevents heat-shock induction of these operons. In Mycobacteroides abscessus (strain ATCC 19977 / DSM 44196 / CCUG 20993 / CIP 104536 / JCM 13569 / NCTC 13031 / TMC 1543 / L948) (Mycobacterium abscessus), this protein is Heat-inducible transcription repressor HrcA.